The following is a 519-amino-acid chain: Chloroethene reductive dehalogenase (519 aa).

Residues 1–43 (MSKFHKTISRRDFMKGLGLAGAGIGAVAASAPVFHDIDELVSS) constitute a signal peptide (tat-type signal). 2 consecutive 4Fe-4S ferredoxin-type domains span residues 388–420 (PTPP…QEDE) and 435–465 (LGYR…LENA). Positions 400, 403, 406, 410, 444, 448, 451, and 455 each coordinate [4Fe-4S] cluster.

It belongs to the PceA family. [4Fe-4S] cluster serves as cofactor. It depends on corrinoid as a cofactor. Predicted to be exported by the Tat system. The position of the signal peptide cleavage has been experimentally proven.

It is found in the cell membrane. The enzyme catalyses chloroethene + AH2 = ethene + chloride + A + H(+). The catalysed reaction is (Z)-1,2-dichloroethene + AH2 = chloroethene + chloride + A + H(+). It catalyses the reaction 1,1-dichloroethene + AH2 = chloroethene + chloride + A + H(+). Its function is as follows. Catalyzes the reductive dechlorination of chloroethene (or vinyl chloride, VC) to ethene. Can also reduce all dichloroethene (DCE) isomers, but not tetrachloroethene (PCE) or trichloroethene (TCE), at high rates. Reduced methyl viologen can act as the artificial electron donor. The polypeptide is Chloroethene reductive dehalogenase (Dehalococcoides mccartyi (strain VS)).